Reading from the N-terminus, the 203-residue chain is Outer-membrane lipoprotein carrier protein (203 aa).

The signal sequence occupies residues 1–19 (MKKSIVVLFSAVLPFAVFA).

This sequence belongs to the LolA family. In terms of assembly, monomer.

Its subcellular location is the periplasm. Functionally, participates in the translocation of lipoproteins from the inner membrane to the outer membrane. Only forms a complex with a lipoprotein if the residue after the N-terminal Cys is not an aspartate (The Asp acts as a targeting signal to indicate that the lipoprotein should stay in the inner membrane). The protein is Outer-membrane lipoprotein carrier protein of Shewanella amazonensis (strain ATCC BAA-1098 / SB2B).